Consider the following 60-residue polypeptide: Large ribosomal subunit protein bL32 (60 aa).

The interval 1–21 is disordered; the sequence is MAVQQNKKSPSKRGMHRAHNA. The segment covering 9–19 has biased composition (basic residues); sequence SPSKRGMHRAH.

The protein belongs to the bacterial ribosomal protein bL32 family.

The protein is Large ribosomal subunit protein bL32 of Albidiferax ferrireducens (strain ATCC BAA-621 / DSM 15236 / T118) (Rhodoferax ferrireducens).